Consider the following 299-residue polypeptide: UDP-N-acetylenolpyruvoylglucosamine reductase (299 aa).

Residues 31-192 (VGGVAEVVFK…VDATFVGACG (162 aa)) form the FAD-binding PCMH-type domain. R172 is a catalytic residue. S221 functions as the Proton donor in the catalytic mechanism. E291 is an active-site residue.

Belongs to the MurB family. It depends on FAD as a cofactor.

It is found in the cytoplasm. The catalysed reaction is UDP-N-acetyl-alpha-D-muramate + NADP(+) = UDP-N-acetyl-3-O-(1-carboxyvinyl)-alpha-D-glucosamine + NADPH + H(+). It functions in the pathway cell wall biogenesis; peptidoglycan biosynthesis. In terms of biological role, cell wall formation. This is UDP-N-acetylenolpyruvoylglucosamine reductase from Anaplasma marginale (strain St. Maries).